A 342-amino-acid chain; its full sequence is Glucokinase (342 aa).

15–20 provides a ligand contact to ATP; that stretch reads GDVGGT.

It belongs to the bacterial glucokinase family.

Its subcellular location is the cytoplasm. It carries out the reaction D-glucose + ATP = D-glucose 6-phosphate + ADP + H(+). In Ralstonia nicotianae (strain ATCC BAA-1114 / GMI1000) (Ralstonia solanacearum), this protein is Glucokinase.